Here is a 140-residue protein sequence, read N- to C-terminus: Translation initiation factor 2 subunit beta (140 aa).

It belongs to the eIF-2-beta/eIF-5 family. In terms of assembly, heterotrimer composed of an alpha, a beta and a gamma chain.

EIF-2 functions in the early steps of protein synthesis by forming a ternary complex with GTP and initiator tRNA. The sequence is that of Translation initiation factor 2 subunit beta (eif2b) from Pyrococcus abyssi (strain GE5 / Orsay).